A 131-amino-acid polypeptide reads, in one-letter code: D-ribose pyranase (131 aa).

H20 functions as the Proton donor in the catalytic mechanism. Substrate is bound by residues D28, H98, and 120-122 (YCN).

It belongs to the RbsD / FucU family. RbsD subfamily. Homodecamer.

The protein localises to the cytoplasm. The catalysed reaction is beta-D-ribopyranose = beta-D-ribofuranose. It participates in carbohydrate metabolism; D-ribose degradation; D-ribose 5-phosphate from beta-D-ribopyranose: step 1/2. Catalyzes the interconversion of beta-pyran and beta-furan forms of D-ribose. This Coprothermobacter proteolyticus (strain ATCC 35245 / DSM 5265 / OCM 4 / BT) protein is D-ribose pyranase.